Here is a 270-residue protein sequence, read N- to C-terminus: Undecaprenyl-diphosphatase 1 (270 aa).

7 helical membrane-spanning segments follow: residues 5–25, 42–62, 89–109, 117–137, 192–212, 220–240, and 250–270; these read YYIL…PIPI, IEGF…VLLI, FFFI…GVLF, LKGV…LWII, FSFL…ITDI, TLFV…YISL, and GNLK…LIFL.

It belongs to the UppP family.

The protein localises to the cell membrane. The catalysed reaction is di-trans,octa-cis-undecaprenyl diphosphate + H2O = di-trans,octa-cis-undecaprenyl phosphate + phosphate + H(+). Catalyzes the dephosphorylation of undecaprenyl diphosphate (UPP). Confers resistance to bacitracin. The sequence is that of Undecaprenyl-diphosphatase 1 from Bacillus cereus (strain ATCC 10987 / NRS 248).